The primary structure comprises 445 residues: Baccatin III:3-amino-3-phenylpropanoyltransferase (445 aa).

This sequence belongs to the plant acyltransferase family.

The catalysed reaction is (3R)-3-amino-3-phenylpropanoyl-CoA + baccatin III = 3'-N-debenzoyl-2'-deoxytaxol + CoA. It functions in the pathway alkaloid biosynthesis; taxol biosynthesis. Acyltransferase involved in taxol biosynthesis. Catalyzes the selective 13-O-acylation of baccatin III with (3R)-3-amino-3-phenylpropanoyl-CoA as the acyl donor to form 3'-N-debenzoyl-2'-deoxytaxol. The sequence is that of Baccatin III:3-amino-3-phenylpropanoyltransferase from Taxus cuspidata (Japanese yew).